We begin with the raw amino-acid sequence, 158 residues long: MSLIPSFFSGRRSNVFDPFSLDVWDPLKDFPFSNSSPSASFPRENPAFVSTRVDWKETPEAHVFKADLPGLKKEEVKVEVEDDRVLQISGERSVEKEDKNDEWHRVERSSGKFLRRFRLPENAKMDKVKASMENGVLTVTVPKEEIKKAEVKSIEISG.

One can recognise a sHSP domain in the interval 44-158 (ENPAFVSTRV…AEVKSIEISG (115 aa)).

Belongs to the small heat shock protein (HSP20) family. Forms oligomeric structures.

The protein localises to the cytoplasm. The sequence is that of 18.1 kDa class I heat shock protein (HSP18.1) from Pisum sativum (Garden pea).